Consider the following 221-residue polypeptide: Ribosomal RNA small subunit methyltransferase G (221 aa).

Residues glycine 83, phenylalanine 88, 132–133 (LE), and arginine 146 each bind S-adenosyl-L-methionine.

It belongs to the methyltransferase superfamily. RNA methyltransferase RsmG family.

It localises to the cytoplasm. It carries out the reaction guanosine(527) in 16S rRNA + S-adenosyl-L-methionine = N(7)-methylguanosine(527) in 16S rRNA + S-adenosyl-L-homocysteine. Functionally, specifically methylates the N7 position of guanine in position 527 of 16S rRNA. The protein is Ribosomal RNA small subunit methyltransferase G of Zymomonas mobilis subsp. mobilis (strain ATCC 31821 / ZM4 / CP4).